The following is a 113-amino-acid chain: Large ribosomal subunit protein bL17 (113 aa).

This sequence belongs to the bacterial ribosomal protein bL17 family. In terms of assembly, part of the 50S ribosomal subunit. Contacts protein L32.

The sequence is that of Large ribosomal subunit protein bL17 from Clostridium beijerinckii (strain ATCC 51743 / NCIMB 8052) (Clostridium acetobutylicum).